The chain runs to 477 residues: MQVLHVCSEMFPLLKTGGLADVIGALPAAQIADGVDARVLLPAFPDIRRGIPDAQVVTRRDTFAGRITLLFGHYNGVGIYLIDAPHLYDRPGSPYHDTNLFAYTDNVLRFALLGWVGCEMACGLDPFWRPDVVHAHDWHAGLAPAYLAARGRPAKSVFTVHNLAYQGMFYAHHMDDIQLPWSFYNMHGLEFNGQISFLKAGLYYADHITAVSPTYAREITEPQFAYGMEGLLRQRHQEGRLSGVLNGVDEKIWSPETDLLLAARYTRDSLEEKAENKRQLQIAMGLKVDDKAPLFAVVSRLTSQKGLDLVLEALPGLLEQGGQLALLGAGDPVLQEGFLAAAAEHPGQVGVQIGYHEAFSHRIMGGADVILVPSRFEPCGLTQLYGLKYGTLPLVRRTGGLADTVSDSSLENLADGIASGFVFEDSNAWSLLRAIRRAFVLWSRPSLWRFVQRQAMAMDFSWQVAAKSYRELYYRLK.

Lys-15 contributes to the ADP-alpha-D-glucose binding site.

It belongs to the glycosyltransferase 1 family. Bacterial/plant glycogen synthase subfamily.

It carries out the reaction [(1-&gt;4)-alpha-D-glucosyl](n) + ADP-alpha-D-glucose = [(1-&gt;4)-alpha-D-glucosyl](n+1) + ADP + H(+). It participates in glycan biosynthesis; glycogen biosynthesis. Its function is as follows. Synthesizes alpha-1,4-glucan chains using ADP-glucose. In Citrobacter koseri (strain ATCC BAA-895 / CDC 4225-83 / SGSC4696), this protein is Glycogen synthase.